A 352-amino-acid polypeptide reads, in one-letter code: Ion-translocating oxidoreductase complex subunit D (352 aa).

5 helical membrane-spanning segments follow: residues 20–40 (IMLL…RFFG), 42–62 (GTLV…ALVL), 78–109 (ALLT…VIIA), 123–143 (PAMI…TSWL), and 148–168 (IAVN…GHTA). The residue at position 187 (threonine 187) is an FMN phosphoryl threonine. Transmembrane regions (helical) follow at residues 214 to 234 (ILAG…GVWL), 242 to 262 (WHIP…GWLF), 267 to 287 (LAAP…FFIL), and 301 to 318 (LMFG…RSFG).

The protein belongs to the NqrB/RnfD family. In terms of assembly, the complex is composed of six subunits: RsxA, RsxB, RsxC, RsxD, RsxE and RsxG. Requires FMN as cofactor.

It localises to the cell inner membrane. Part of a membrane-bound complex that couples electron transfer with translocation of ions across the membrane. Required to maintain the reduced state of SoxR. The protein is Ion-translocating oxidoreductase complex subunit D of Shigella flexneri.